The sequence spans 615 residues: Elongation factor 4 (615 aa).

The tr-type G domain maps to 14–200 (QQIRNFCIIA…KVAELIPAPT (187 aa)). GTP-binding positions include 26-31 (DHGKST) and 147-150 (NKID).

The protein belongs to the TRAFAC class translation factor GTPase superfamily. Classic translation factor GTPase family. LepA subfamily.

Its subcellular location is the cell membrane. It carries out the reaction GTP + H2O = GDP + phosphate + H(+). In terms of biological role, required for accurate and efficient protein synthesis under certain stress conditions. May act as a fidelity factor of the translation reaction, by catalyzing a one-codon backward translocation of tRNAs on improperly translocated ribosomes. Back-translocation proceeds from a post-translocation (POST) complex to a pre-translocation (PRE) complex, thus giving elongation factor G a second chance to translocate the tRNAs correctly. Binds to ribosomes in a GTP-dependent manner. The polypeptide is Elongation factor 4 (Corynebacterium diphtheriae (strain ATCC 700971 / NCTC 13129 / Biotype gravis)).